The following is an 80-amino-acid chain: Protein P9 (80 aa).

Self-associates.

In Beta vulgaris (Sugar beet), this protein is Protein P9.